Here is a 206-residue protein sequence, read N- to C-terminus: Large ribosomal subunit protein uL4 (206 aa).

It belongs to the universal ribosomal protein uL4 family. As to quaternary structure, part of the 50S ribosomal subunit.

In terms of biological role, one of the primary rRNA binding proteins, this protein initially binds near the 5'-end of the 23S rRNA. It is important during the early stages of 50S assembly. It makes multiple contacts with different domains of the 23S rRNA in the assembled 50S subunit and ribosome. Its function is as follows. Forms part of the polypeptide exit tunnel. The protein is Large ribosomal subunit protein uL4 of Xanthobacter autotrophicus (strain ATCC BAA-1158 / Py2).